The chain runs to 290 residues: Bifunctional protein FolD (290 aa).

Residues 166 to 168, Ser191, and Ile232 contribute to the NADP(+) site; that span reads GQS.

This sequence belongs to the tetrahydrofolate dehydrogenase/cyclohydrolase family. As to quaternary structure, homodimer.

The catalysed reaction is (6R)-5,10-methylene-5,6,7,8-tetrahydrofolate + NADP(+) = (6R)-5,10-methenyltetrahydrofolate + NADPH. It catalyses the reaction (6R)-5,10-methenyltetrahydrofolate + H2O = (6R)-10-formyltetrahydrofolate + H(+). It participates in one-carbon metabolism; tetrahydrofolate interconversion. In terms of biological role, catalyzes the oxidation of 5,10-methylenetetrahydrofolate to 5,10-methenyltetrahydrofolate and then the hydrolysis of 5,10-methenyltetrahydrofolate to 10-formyltetrahydrofolate. The protein is Bifunctional protein FolD of Halorhodospira halophila (strain DSM 244 / SL1) (Ectothiorhodospira halophila (strain DSM 244 / SL1)).